Consider the following 313-residue polypeptide: B3 domain-containing transcription factor FUS3 (313 aa).

A DNA-binding region (TF-B3) is located at residues 92–194 (FQKELKNSDV…NYVIQARKAS (103 aa)).

In terms of assembly, interacts with KIN10. Phosphorylation by KIN10 increases its stability. Phosphorylated at one or more of the Ser-55, Ser-56 and/or Ser-57 residues. Expressed in cotyledons and hypocotyls.

The protein localises to the nucleus. Phosphorylation by KIN10 is required to positively regulates embryogenesis, seed yield, and plant growth at high temperature. Its function is as follows. Transcription regulator involved in gene regulation during late embryogenesis. Its expression to the epidermis is sufficient to control foliar organ identity by regulating positively the synthesis abscisic acid (ABA) and negatively gibberellin production. Negatively regulates TTG1 in the embryo. Positively regulates the abundance of the ABI3 protein in the seed. Cooperates with KIN10 to regulate developmental phase transitions and lateral organ development and act both as positive regulators of abscisic acid (ABA) signaling during germination. The sequence is that of B3 domain-containing transcription factor FUS3 (FUS3) from Arabidopsis thaliana (Mouse-ear cress).